We begin with the raw amino-acid sequence, 3195 residues long: Large tegument protein deneddylase (3195 aa).

The 233-residue stretch at 10 to 242 (VAAASRSQFD…VEVISAALRA (233 aa)) folds into the Peptidase C76 domain. Residues Cys30, Asp173, and His175 contribute to the active site. Disordered stretches follow at residues 287–374 (RGTA…GALA), 2407–2776 (NPAH…DSNY), 2829–3068 (AGVG…AALD), and 3128–3147 (ASDL…APLD). Basic residues predominate over residues 338–347 (KVKKPNKGKK). Basic and acidic residues predominate over residues 2470-2482 (KIERASGKNRKTE). The span at 2491-2503 (AARGRAAAPPTET) shows a compositional bias: low complexity. 2 stretches are compositionally biased toward basic and acidic residues: residues 2504-2527 (KTTE…RAPH) and 2538-2562 (RPPR…DKAA). 2 stretches are compositionally biased toward basic residues: residues 2588 to 2615 (PKTK…HRTH) and 2636 to 2648 (GRQR…GKKR). Composition is skewed to basic and acidic residues over residues 2649 to 2672 (SGTD…KFSR) and 2687 to 2696 (ACDRLGERGN). The span at 2701-2712 (PRAPASSPPPPG) shows a compositional bias: pro residues. Residues 2714–2723 (QADHGIDQRE) are compositionally biased toward basic and acidic residues. 2 stretches are compositionally biased toward acidic residues: residues 2748-2768 (DDGD…EEDV) and 2835-2844 (WSEEDEDAPA). The segment covering 2850–2864 (STNVEVATHGYTSDD) has biased composition (polar residues). A compositionally biased stretch (basic and acidic residues) spans 2869–2878 (DESKRARATR). Low complexity predominate over residues 2887-2903 (PASPLAPSTPSSLPTPA). A compositionally biased stretch (basic and acidic residues) spans 2959–2981 (DDARKKQENSSHERKDDGVRWEI). Residues 2982 to 2994 (DLDSDQGDYSDAS) show a composition bias toward acidic residues. 3 stretches are compositionally biased toward basic and acidic residues: residues 2995–3021 (DDCK…KSES), 3050–3062 (SDDK…DPKL), and 3131–3140 (LDDHQSDQPR).

It belongs to the herpesviridae large tegument protein family. In terms of assembly, interacts with host CUL1 and CUL4A; these interactions inhibit the E3 ligase activity of cullins. Interacts with inner tegument protein. Interacts with capsid vertex specific component CVC2. Interacts with the major capsid protein/MCP.

It localises to the virion tegument. The protein resides in the host cytoplasm. Its subcellular location is the host nucleus. The catalysed reaction is Thiol-dependent hydrolysis of ester, thioester, amide, peptide and isopeptide bonds formed by the C-terminal Gly of ubiquitin (a 76-residue protein attached to proteins as an intracellular targeting signal).. In terms of biological role, large tegument protein that plays multiple roles in the viral cycle. During viral entry, remains associated with the capsid while most of the tegument is detached and participates in the capsid transport toward the host nucleus. Plays a role in the routing of the capsid at the nuclear pore complex and subsequent uncoating. Within the host nucleus, acts as a deneddylase and promotes the degradation of nuclear CRLs (cullin-RING ubiquitin ligases) and thereby stabilizes nuclear CRL substrates, while cytoplasmic CRLs remain unaffected. These modifications prevent host cell cycle S-phase progression and create a favorable environment allowing efficient viral genome replication. Participates later in the secondary envelopment of capsids. Indeed, plays a linker role for the association of the outer viral tegument to the capsids together with the inner tegument protein. The chain is Large tegument protein deneddylase (UL36) from Amazona oratrix (yellow-headed parrot).